The sequence spans 448 residues: Chromosomal replication initiator protein DnaA (448 aa).

Residues Met-1–Lys-73 are domain I, interacts with DnaA modulators. A domain II region spans residues Lys-73 to Thr-109. Residues Met-110–Ser-326 form a domain III, AAA+ region region. ATP contacts are provided by Gly-154, Gly-156, Lys-157, and Thr-158. A domain IV, binds dsDNA region spans residues Ser-327 to Lys-448.

Belongs to the DnaA family. In terms of assembly, oligomerizes as a right-handed, spiral filament on DNA at oriC.

The protein resides in the cytoplasm. Its function is as follows. Plays an essential role in the initiation and regulation of chromosomal replication. ATP-DnaA binds to the origin of replication (oriC) to initiate formation of the DNA replication initiation complex once per cell cycle. Binds the DnaA box (a 9 base pair repeat at the origin) and separates the double-stranded (ds)DNA. Forms a right-handed helical filament on oriC DNA; dsDNA binds to the exterior of the filament while single-stranded (ss)DNA is stabiized in the filament's interior. The ATP-DnaA-oriC complex binds and stabilizes one strand of the AT-rich DNA unwinding element (DUE), permitting loading of DNA polymerase. After initiation quickly degrades to an ADP-DnaA complex that is not apt for DNA replication. Binds acidic phospholipids. The polypeptide is Chromosomal replication initiator protein DnaA (Clostridium botulinum (strain 657 / Type Ba4)).